Consider the following 176-residue polypeptide: Large ribosomal subunit protein uL6 (176 aa).

Belongs to the universal ribosomal protein uL6 family. Part of the 50S ribosomal subunit.

Its function is as follows. This protein binds to the 23S rRNA, and is important in its secondary structure. It is located near the subunit interface in the base of the L7/L12 stalk, and near the tRNA binding site of the peptidyltransferase center. This Paraburkholderia phymatum (strain DSM 17167 / CIP 108236 / LMG 21445 / STM815) (Burkholderia phymatum) protein is Large ribosomal subunit protein uL6.